The primary structure comprises 502 residues: L-amino-acid oxidase BmooLAAO-I (502 aa).

Positions 1–18 (MNVFFTFSLLFLAALGSC) are cleaved as a signal peptide. An intrachain disulfide couples C28 to C191. FAD-binding positions include 61-62 (MS), 81-82 (EA), R89, and 105-108 (GPMR). Residue R108 participates in substrate binding. N190 carries an N-linked (GlcNAc...) asparagine glycan. Substrate is bound at residue H241. Position 279 (V279) interacts with FAD. A disulfide bridge connects residues C349 and C430. Residue Y390 participates in substrate binding. FAD contacts are provided by residues E475 and 482–487 (GWIDST). 482–483 (GW) is a substrate binding site.

It belongs to the flavin monoamine oxidase family. FIG1 subfamily. In terms of assembly, homodimer; non-covalently linked. The cofactor is FAD. N-glycosylated. The enzymatic activity is not affected by deglycosylation. As to expression, expressed by the venom gland.

It localises to the secreted. It catalyses the reaction an L-alpha-amino acid + O2 + H2O = a 2-oxocarboxylate + H2O2 + NH4(+). It carries out the reaction L-leucine + O2 + H2O = 4-methyl-2-oxopentanoate + H2O2 + NH4(+). The catalysed reaction is L-phenylalanine + O2 + H2O = 3-phenylpyruvate + H2O2 + NH4(+). The enzyme catalyses L-tryptophan + O2 + H2O = indole-3-pyruvate + H2O2 + NH4(+). It catalyses the reaction L-methionine + O2 + H2O = 4-methylsulfanyl-2-oxobutanoate + H2O2 + NH4(+). It carries out the reaction L-isoleucine + O2 + H2O = (S)-3-methyl-2-oxopentanoate + H2O2 + NH4(+). The catalysed reaction is L-histidine + O2 + H2O = 3-(imidazol-5-yl)pyruvate + H2O2 + NH4(+). The enzyme catalyses L-tyrosine + O2 + H2O = 3-(4-hydroxyphenyl)pyruvate + H2O2 + NH4(+). It catalyses the reaction L-alanine + O2 + H2O = pyruvate + H2O2 + NH4(+). It carries out the reaction L-valine + O2 + H2O = 3-methyl-2-oxobutanoate + H2O2 + NH4(+). Its activity is regulated as follows. Its enzymatic activities is reduced when it is exposed to Ca(2+), Zn(2+), Al(3+), Cu(2+) or Ni(2+) salts. In terms of biological role, catalyzes an oxidative deamination of predominantly hydrophobic and aromatic L-amino acids, thus producing hydrogen peroxide that may contribute to the toxicity of the venom. Shows very high activity on L-Met, and L-Leu, high activity on L-Ile, L-Phe and L-Tyr and moderate activity on L-His, L-Val and L-Ala. Exhibits diverse biological activities, such as edema, apoptosis of tumor cell lines, antibacterial activities against both Gram-positive and Gram-negative bacteria, as well as induction of platelet aggregation. Effects of snake L-amino oxidases on platelets are controversial, since they either induce aggregation or inhibit agonist-induced aggregation. These different effects are probably due to different experimental conditions. Unlike other snake venom L-amino acid oxidases, does not induce hemorrhage. It may also induce hemolysis. Has parasiticidal activities against and leishmania, as a result of enzyme-catalyzed hydrogen peroxide production. This is L-amino-acid oxidase BmooLAAO-I from Bothrops moojeni (Lance-headed viper).